Consider the following 111-residue polypeptide: Secreted transmembrane peptide 5 (111 aa).

Residues 1–46 form the signal peptide; sequence MRLSVFYIFITRLAMTKNATKNEMGSKSPNIVALVLPLLLILYTLS. An SCOOP motif motif is present at residues 66 to 79; that stretch reads IVWTPHSNSCGGSP. A SxS motif essential for MIK2 binding motif is present at residues 72–74; it reads SNS. Residues 89–111 are disordered; sequence TTGRPCRRSRPPGTNIPVSDQSP.

This sequence belongs to the serine rich endogenous peptide (SCOOP) phytocytokine family. As to quaternary structure, interacts with MIK2 (via extracellular leucine-rich repeat domain); this interaction triggers the formation of complex between MIK2 and the BAK1/SERK3 and SERK4 coreceptors, and subsequent BAK1 activation by phosphorylation. In terms of tissue distribution, mostly expressed in leaves, and, to a lower extent, in roots, stems, siliques, seeds and flowers.

The protein localises to the cell membrane. It is found in the secreted. The protein resides in the extracellular space. Its subcellular location is the apoplast. Its function is as follows. Brassicaceae-specific phytocytokine (plant endogenous peptide released into the apoplast) perceived by MIK2 in a BAK1/SERK3 and SERK4 coreceptors-dependent manner, that modulates various physiological and antimicrobial processes including growth prevention and reactive oxygen species (ROS) response regulation. In Arabidopsis thaliana (Mouse-ear cress), this protein is Secreted transmembrane peptide 5.